A 199-amino-acid polypeptide reads, in one-letter code: Recombination protein RecR (199 aa).

A C4-type zinc finger spans residues 57-72 (CEICGNLDTKSICHIC). The 96-residue stretch at 80–175 (STIAIVETVA…KISRLASGIP (96 aa)) folds into the Toprim domain.

This sequence belongs to the RecR family.

In terms of biological role, may play a role in DNA repair. It seems to be involved in an RecBC-independent recombinational process of DNA repair. It may act with RecF and RecO. The polypeptide is Recombination protein RecR (Rickettsia prowazekii (strain Madrid E)).